The following is a 408-amino-acid chain: Na(+)/H(+) antiporter NhaA 2 (408 aa).

Transmembrane regions (helical) follow at residues 36 to 56 (GILL…GLGV), 79 to 99 (ILLW…GLEI), 115 to 135 (ALPV…YFLF), 145 to 165 (GWGI…SLLG), 174 to 194 (IFLA…IAVF), 197 to 217 (SELH…LMVF), 225 to 245 (LFFY…SGIH), 281 to 301 (FIIM…SEML), 310 to 330 (LGII…MSWL), 348 to 368 (VLGL…IALL), and 381 to 401 (FAIL…LSSY).

This sequence belongs to the NhaA Na(+)/H(+) (TC 2.A.33) antiporter family.

The protein resides in the cell inner membrane. The enzyme catalyses Na(+)(in) + 2 H(+)(out) = Na(+)(out) + 2 H(+)(in). Its function is as follows. Na(+)/H(+) antiporter that extrudes sodium in exchange for external protons. The chain is Na(+)/H(+) antiporter NhaA 2 from Flavobacterium johnsoniae (strain ATCC 17061 / DSM 2064 / JCM 8514 / BCRC 14874 / CCUG 350202 / NBRC 14942 / NCIMB 11054 / UW101) (Cytophaga johnsonae).